The primary structure comprises 235 residues: Octanoyltransferase (235 aa).

Positions 59-235 (PGSSQAVWLL…KKSLTERFGL (177 aa)) constitute a BPL/LPL catalytic domain. Residues 101–108 (RGGEVTHH), 168–170 (SIG), and 181–183 (GLS) contribute to the substrate site. Catalysis depends on C199, which acts as the Acyl-thioester intermediate.

The protein belongs to the LipB family.

It is found in the cytoplasm. It catalyses the reaction octanoyl-[ACP] + L-lysyl-[protein] = N(6)-octanoyl-L-lysyl-[protein] + holo-[ACP] + H(+). The protein operates within protein modification; protein lipoylation via endogenous pathway; protein N(6)-(lipoyl)lysine from octanoyl-[acyl-carrier-protein]: step 1/2. Its function is as follows. Catalyzes the transfer of endogenously produced octanoic acid from octanoyl-acyl-carrier-protein onto the lipoyl domains of lipoate-dependent enzymes. Lipoyl-ACP can also act as a substrate although octanoyl-ACP is likely to be the physiological substrate. This Prochlorococcus marinus (strain MIT 9211) protein is Octanoyltransferase.